We begin with the raw amino-acid sequence, 176 residues long: 3-hydroxydecanoyl-[acyl-carrier-protein] dehydratase (176 aa).

His70 is an active-site residue.

It belongs to the thioester dehydratase family. FabA subfamily. In terms of assembly, homodimer.

The protein resides in the cytoplasm. The enzyme catalyses a (3R)-hydroxyacyl-[ACP] = a (2E)-enoyl-[ACP] + H2O. It carries out the reaction (3R)-hydroxydecanoyl-[ACP] = (2E)-decenoyl-[ACP] + H2O. It catalyses the reaction (2E)-decenoyl-[ACP] = (3Z)-decenoyl-[ACP]. The protein operates within lipid metabolism; fatty acid biosynthesis. Necessary for the introduction of cis unsaturation into fatty acids. Catalyzes the dehydration of (3R)-3-hydroxydecanoyl-ACP to E-(2)-decenoyl-ACP and then its isomerization to Z-(3)-decenoyl-ACP. Can catalyze the dehydratase reaction for beta-hydroxyacyl-ACPs with saturated chain lengths up to 16:0, being most active on intermediate chain length. This Alkalilimnicola ehrlichii (strain ATCC BAA-1101 / DSM 17681 / MLHE-1) protein is 3-hydroxydecanoyl-[acyl-carrier-protein] dehydratase.